Consider the following 228-residue polypeptide: MSSDVVVAIDGPAGTGKSSVSKGLARALGARYLDTGGMYRMVTLAVLRAGIDPADAEAVGRAAQAVRMSVDYHPDGDRYFLGGEDVSTEIRGDKVTAAVSAVSSVPAVRTRLVGLQREMASGPGSIVVEGRDIGTVVLPDAPVKIFLTASAETRARRRNDQNVAAGLADDYEAVLADVRRRDHLDSTRRVSPLRAAPDAVVVDTSDMTEAQVIDHLRDLVRQRSEVAR.

Position 11 to 19 (11 to 19 (GPAGTGKSS)) interacts with ATP.

It belongs to the cytidylate kinase family. Type 1 subfamily.

The protein localises to the cytoplasm. It carries out the reaction CMP + ATP = CDP + ADP. It catalyses the reaction dCMP + ATP = dCDP + ADP. This Mycolicibacterium paratuberculosis (strain ATCC BAA-968 / K-10) (Mycobacterium paratuberculosis) protein is Cytidylate kinase.